The chain runs to 842 residues: Glycogen phosphorylase, muscle form (842 aa).

The residue at position 2 (S2) is an N-acetylserine. A Phosphoserine; by PHK; in form phosphorylase A modification is found at S15. 2 residues coordinate AMP: D43 and Y76. Phosphotyrosine is present on residues Y204 and Y227. Position 310–319 (310–319 (RRFKSSKFGC)) interacts with AMP. At S430 the chain carries Phosphoserine. A Phosphotyrosine modification is found at Y473. The residue at position 681 (K681) is an N6-(pyridoxal phosphate)lysine. S747 and S748 each carry phosphoserine.

Belongs to the glycogen phosphorylase family. In terms of assembly, homodimer. Homotetramer; to form the enzymatically active phosphorylase A. It depends on pyridoxal 5'-phosphate as a cofactor. Phosphorylation of Ser-15 converts phosphorylase B (unphosphorylated) to phosphorylase A.

The enzyme catalyses [(1-&gt;4)-alpha-D-glucosyl](n) + phosphate = [(1-&gt;4)-alpha-D-glucosyl](n-1) + alpha-D-glucose 1-phosphate. With respect to regulation, allosterically regulated through the non-covalent binding of metabolites, being activated by AMP and inhibited by ATP, ADP, and glucose-6-phosphate. The activity is also controlled by post-translational modifications including phosphorylation. Functionally, allosteric enzyme that catalyzes the rate-limiting step in glycogen catabolism, the phosphorolytic cleavage of glycogen to produce glucose-1-phosphate, and plays a central role in maintaining cellular and organismal glucose homeostasis. The polypeptide is Glycogen phosphorylase, muscle form (Ovis aries (Sheep)).